Reading from the N-terminus, the 416-residue chain is MFGRVPRSNNTKYYEVLGVPKTASKDELKKAYRKAAIKNHPDKGGDPEKFKELSQAYEVLTDPEKRDIYDQYGEDALKDGMGGGSDFHNPFDIFEQFFGGGAFGGSSSRVRRQRRGEDVAHTLKVSLEDVYNGSMKKLSLSRNILCPKCKGKGTKSEAPATCYGCHGVGMRNIMRQIGLGMIQHMQTVCPECRGSGEIISDRDKCTNCRASKVIQEKKVLEVHIEKGMQHGQKIVFQGEADEAPDTVTGDIVFILQVKVHPRFKRKYDDLFIERTISLTEALCGFQFILTHLDSRQLLIKANPGEIIKPGQHKAINDEGMPHHGRPFMKGRLFVEFNVEFPESGVLSRDQCRALEMILPPKPGHQLSDMDLDQCEETTMHDVNIEEEMRRKQYQRKQEAYDEDEEEDAPRVQCAQQ.

The J domain occupies 12–73 (KYYEVLGVPK…EKRDIYDQYG (62 aa)). The CR-type zinc-finger motif lies at 133-217 (GSMKKLSLSR…CRASKVIQEK (85 aa)). Positions 146, 149, 162, 165, 189, 192, 205, and 208 each coordinate Zn(2+). CXXCXGXG motif repeat units follow at residues 146–153 (CPKCKGKG), 162–169 (CYGCHGVG), and 189–196 (CPECRGSG). A compositionally biased stretch (basic and acidic residues) spans 380–399 (HDVNIEEEMRRKQYQRKQEA). Positions 380 to 416 (HDVNIEEEMRRKQYQRKQEAYDEDEEEDAPRVQCAQQ) are disordered.

It belongs to the DnaJ family. As to quaternary structure, interacts with ZFP1.

It localises to the nucleus. The protein resides in the cytoplasm. Its function is as follows. Involved in disease resistance. Acts as a negative regulator of innate immunity to the rice blast fungus (Magnaporthe oryzae). Acts as a negative regulator of the pathogen-associated molecular pattern (PAMP)-triggered immunity (PTI) response through the inhibition of reactive oxygen species (ROS) accumulation and expression of defense-related genes. May function via the ubiquitin-proteasome degradation pathway. This Oryza sativa subsp. japonica (Rice) protein is Chaperone protein dnaJ A6.